The chain runs to 374 residues: Peptide chain release factor 2 (374 aa).

Gln250 is modified (N5-methylglutamine).

It belongs to the prokaryotic/mitochondrial release factor family. Methylated by PrmC. Methylation increases the termination efficiency of RF2.

Its subcellular location is the cytoplasm. Peptide chain release factor 2 directs the termination of translation in response to the peptide chain termination codons UGA and UAA. This chain is Peptide chain release factor 2, found in Roseobacter denitrificans (strain ATCC 33942 / OCh 114) (Erythrobacter sp. (strain OCh 114)).